The following is a 454-amino-acid chain: Arginine biosynthesis bifunctional protein ArgJ, mitochondrial (454 aa).

The substrate site is built by Thr-184, Lys-213, Thr-224, Glu-311, Asn-449, and Thr-454. Thr-224 serves as the catalytic Nucleophile.

This sequence belongs to the ArgJ family. As to quaternary structure, heterodimer of an alpha and a beta chain. Post-translationally, the alpha and beta chains are autoproteolytically processed from a single precursor protein within the mitochondrion.

It is found in the mitochondrion matrix. The enzyme catalyses N(2)-acetyl-L-ornithine + L-glutamate = N-acetyl-L-glutamate + L-ornithine. It catalyses the reaction L-glutamate + acetyl-CoA = N-acetyl-L-glutamate + CoA + H(+). It participates in amino-acid biosynthesis; L-arginine biosynthesis; L-ornithine and N-acetyl-L-glutamate from L-glutamate and N(2)-acetyl-L-ornithine (cyclic): step 1/1. The protein operates within amino-acid biosynthesis; L-arginine biosynthesis; N(2)-acetyl-L-ornithine from L-glutamate: step 1/4. In terms of biological role, catalyzes two activities which are involved in the cyclic version of arginine biosynthesis: the synthesis of acetylglutamate from glutamate and acetyl-CoA, and of ornithine by transacetylation between acetylornithine and glutamate. The polypeptide is Arginine biosynthesis bifunctional protein ArgJ, mitochondrial (Aspergillus clavatus (strain ATCC 1007 / CBS 513.65 / DSM 816 / NCTC 3887 / NRRL 1 / QM 1276 / 107)).